The chain runs to 185 residues: Ribosome-recycling factor (185 aa).

The protein belongs to the RRF family.

It is found in the cytoplasm. In terms of biological role, responsible for the release of ribosomes from messenger RNA at the termination of protein biosynthesis. May increase the efficiency of translation by recycling ribosomes from one round of translation to another. The sequence is that of Ribosome-recycling factor from Thermomicrobium roseum (strain ATCC 27502 / DSM 5159 / P-2).